The sequence spans 397 residues: Acetate kinase 2 (397 aa).

Position 10 (Asn10) interacts with Mg(2+). Residue Lys17 coordinates ATP. Residue Arg90 participates in substrate binding. Catalysis depends on Asp147, which acts as the Proton donor/acceptor. ATP contacts are provided by residues His207 to Gly211, Asp281 to Arg283, and Gly329 to Asn333. Glu385 contributes to the Mg(2+) binding site.

The protein belongs to the acetokinase family. As to quaternary structure, homodimer. It depends on Mg(2+) as a cofactor. The cofactor is Mn(2+).

The protein resides in the cytoplasm. It carries out the reaction acetate + ATP = acetyl phosphate + ADP. The protein operates within metabolic intermediate biosynthesis; acetyl-CoA biosynthesis; acetyl-CoA from acetate: step 1/2. In terms of biological role, catalyzes the formation of acetyl phosphate from acetate and ATP. Can also catalyze the reverse reaction. In Vibrio cholerae serotype O1 (strain ATCC 39315 / El Tor Inaba N16961), this protein is Acetate kinase 2.